Consider the following 239-residue polypeptide: Thymidylate kinase (239 aa).

Residue 10-17 (GVNRVGKS) coordinates ATP.

Belongs to the thymidylate kinase family.

The catalysed reaction is dTMP + ATP = dTDP + ADP. Its pathway is pyrimidine metabolism; dTTP biosynthesis. In terms of biological role, catalyzes the conversion of dTMP to dTDP. The protein is Thymidylate kinase (TMK) of African swine fever virus (isolate Tick/South Africa/Pretoriuskop Pr4/1996) (ASFV).